A 446-amino-acid polypeptide reads, in one-letter code: Methionine aminopeptidase 2 (446 aa).

Residues 1-91 are disordered; that stretch reads MAAQVTDALK…PPRVLLSNLF (91 aa). Over residues 36-48 the composition is skewed to acidic residues; that stretch reads EAEDSDDEEEEPV. Residues 59-72 show a composition bias toward basic residues; that stretch reads KKKRKRKKKPKKKA. Residue H199 coordinates substrate. Residues D219, D230, and H299 each contribute to the a divalent metal cation site. H307 serves as a coordination point for substrate. 2 residues coordinate a divalent metal cation: E332 and E427.

Belongs to the peptidase M24A family. Methionine aminopeptidase eukaryotic type 2 subfamily. It depends on Co(2+) as a cofactor. The cofactor is Zn(2+). Requires Mn(2+) as cofactor. Fe(2+) serves as cofactor.

It is found in the cytoplasm. It catalyses the reaction Release of N-terminal amino acids, preferentially methionine, from peptides and arylamides.. Functionally, cotranslationally removes the N-terminal methionine from nascent proteins. The N-terminal methionine is often cleaved when the second residue in the primary sequence is small and uncharged (Met-Ala-, Cys, Gly, Pro, Ser, Thr, or Val). This is Methionine aminopeptidase 2 from Sclerotinia sclerotiorum (strain ATCC 18683 / 1980 / Ss-1) (White mold).